The sequence spans 199 residues: Acireductone dioxygenase 2 (199 aa).

Residues H98, H100, E104, and H143 each contribute to the Fe(2+) site. The Ni(2+) site is built by H98, H100, E104, and H143.

Belongs to the acireductone dioxygenase (ARD) family. The cofactor is Fe(2+). Ni(2+) is required as a cofactor.

It localises to the cytoplasm. The protein resides in the nucleus. The enzyme catalyses 1,2-dihydroxy-5-(methylsulfanyl)pent-1-en-3-one + O2 = 4-methylsulfanyl-2-oxobutanoate + formate + 2 H(+). It carries out the reaction 1,2-dihydroxy-5-(methylsulfanyl)pent-1-en-3-one + O2 = 3-(methylsulfanyl)propanoate + CO + formate + 2 H(+). It functions in the pathway amino-acid biosynthesis; L-methionine biosynthesis via salvage pathway; L-methionine from S-methyl-5-thio-alpha-D-ribose 1-phosphate: step 5/6. In terms of biological role, catalyzes 2 different reactions between oxygen and the acireductone 1,2-dihydroxy-3-keto-5-methylthiopentene (DHK-MTPene) depending upon the metal bound in the active site. Fe-containing acireductone dioxygenase (Fe-ARD) produces formate and 2-keto-4-methylthiobutyrate (KMTB), the alpha-ketoacid precursor of methionine in the methionine recycle pathway. Ni-containing acireductone dioxygenase (Ni-ARD) produces methylthiopropionate, carbon monoxide and formate, and does not lie on the methionine recycle pathway. This is Acireductone dioxygenase 2 from Vitis vinifera (Grape).